A 167-amino-acid chain; its full sequence is Small heat shock protein C1 (167 aa).

Residues 59 to 167 (SLYESNSIKS…EQEAREIVID (109 aa)) form the sHSP domain.

Belongs to the small heat shock protein (HSP20) family.

The protein is Small heat shock protein C1 (hspC1) of Rickettsia conorii (strain ATCC VR-613 / Malish 7).